A 318-amino-acid chain; its full sequence is MNLVRTAMLLAFMTALFMFVGFLIGGRGGMMIAFLIAAGMNFFSYWNSDRMVLAAYRAHEIDERNAPEFFAIVRDLARNAGLPMPKVYLYDSPQPNAFATGRNPENAAVAASTGLLQALSPEEVAGVMAHELAHIQNRDTLTMTITATLAGAISMLGNFAFFFGGNRDNNNNPLGFVGVLVAMIVAPLAAMLVQMAISRTREYSADRRGAEICGNPLWLASALGKIARGAAHVPNEDAERNPATAHMFIINPLSGERMDNLFSTHPDTENRIAALQEMAQSGMNVSTGPVRAVNPTRKSRSVPNTGRGGSQPPRGPWS.

Transmembrane regions (helical) follow at residues 6–26 and 28–48; these read TAML…LIGG and GGMM…YWNS. His-130 is a Zn(2+) binding site. Glu-131 is an active-site residue. His-134 lines the Zn(2+) pocket. Transmembrane regions (helical) follow at residues 145 to 165 and 173 to 193; these read ITAT…FFGG and PLGF…AMLV. Glu-202 is a Zn(2+) binding site. The tract at residues 284–318 is disordered; it reads NVSTGPVRAVNPTRKSRSVPNTGRGGSQPPRGPWS.

Belongs to the peptidase M48B family. Requires Zn(2+) as cofactor.

Its subcellular location is the cell inner membrane. In Rhizobium etli (strain ATCC 51251 / DSM 11541 / JCM 21823 / NBRC 15573 / CFN 42), this protein is Protease HtpX homolog.